Consider the following 525-residue polypeptide: Peptide chain release factor 3 (525 aa).

Residues 11-279 (NNRRTFAIIS…AYLKYAPKPA (269 aa)) form the tr-type G domain. GTP-binding positions include 20-27 (SHPDAGKT), 88-92 (DTPGH), and 142-145 (NKLD).

This sequence belongs to the TRAFAC class translation factor GTPase superfamily. Classic translation factor GTPase family. PrfC subfamily.

The protein localises to the cytoplasm. Functionally, increases the formation of ribosomal termination complexes and stimulates activities of RF-1 and RF-2. It binds guanine nucleotides and has strong preference for UGA stop codons. It may interact directly with the ribosome. The stimulation of RF-1 and RF-2 is significantly reduced by GTP and GDP, but not by GMP. In Ligilactobacillus salivarius (strain UCC118) (Lactobacillus salivarius), this protein is Peptide chain release factor 3.